A 152-amino-acid polypeptide reads, in one-letter code: Large ribosomal subunit protein bL17 (152 aa).

Residues 121-140 form a disordered region; that stretch reads APSASQKTGKQDRAKRVKGS.

Belongs to the bacterial ribosomal protein bL17 family. As to quaternary structure, part of the 50S ribosomal subunit. Contacts protein L32.

This Pelodictyon phaeoclathratiforme (strain DSM 5477 / BU-1) protein is Large ribosomal subunit protein bL17.